Here is a 195-residue protein sequence, read N- to C-terminus: CASP-like protein IN26 (195 aa).

Residues 1-26 (VAPTGSVETEKAGPSYKPKEYYKVTE) are Cytoplasmic-facing. The chain crosses the membrane as a helical span at residues 27-47 (AILRLLLLASLVVAVVVMVTS). Residues 48–75 (KETELISVKLDPFPPFMLPLTAKFTQSP) lie on the Extracellular side of the membrane. The helical transmembrane segment at 76–96 (AFIYFVAGLSVAGLYTIISTL) threads the bilayer. Over 97-120 (ASFYNLLIKPGFCPALVSHFIILD) the chain is Cytoplasmic. A helical membrane pass occupies residues 121–143 (VVMLGIVGTATGAAGGVAYIGLK). Over 144 to 163 (GNSHVGWTKVCNKYGKLCTH) the chain is Extracellular. Residues 164 to 184 (LGASLAVSFFAFIVLLLLIIL) form a helical membrane-spanning segment. The Cytoplasmic portion of the chain corresponds to 185 to 195 (SIHSLSKKIPK).

This sequence belongs to the Casparian strip membrane proteins (CASP) family. As to quaternary structure, homodimer and heterodimers.

It localises to the cell membrane. This chain is CASP-like protein IN26 (IN26), found in Ipomoea nil (Japanese morning glory).